The primary structure comprises 345 residues: GTPase Obg (345 aa).

One can recognise an Obg domain in the interval 1–159 (MRFIDEASIT…FHLKLELKLL (159 aa)). The OBG-type G domain maps to 160–329 (ADVGIVGLPN…LIQILARQIA (170 aa)). GTP contacts are provided by residues 166–173 (GLPNAGKS), 191–195 (FTTLT), 213–216 (DIPG), 283–286 (NKID), and 310–312 (SAA). Ser173 and Thr193 together coordinate Mg(2+).

Belongs to the TRAFAC class OBG-HflX-like GTPase superfamily. OBG GTPase family. In terms of assembly, monomer. Requires Mg(2+) as cofactor.

The protein localises to the cytoplasm. Functionally, an essential GTPase which binds GTP, GDP and possibly (p)ppGpp with moderate affinity, with high nucleotide exchange rates and a fairly low GTP hydrolysis rate. Plays a role in control of the cell cycle, stress response, ribosome biogenesis and in those bacteria that undergo differentiation, in morphogenesis control. The polypeptide is GTPase Obg (Desulforapulum autotrophicum (strain ATCC 43914 / DSM 3382 / VKM B-1955 / HRM2) (Desulfobacterium autotrophicum)).